The primary structure comprises 463 residues: Argininosuccinate lyase (463 aa).

Belongs to the lyase 1 family. Argininosuccinate lyase subfamily.

Its subcellular location is the cytoplasm. It carries out the reaction 2-(N(omega)-L-arginino)succinate = fumarate + L-arginine. Its pathway is amino-acid biosynthesis; L-arginine biosynthesis; L-arginine from L-ornithine and carbamoyl phosphate: step 3/3. This chain is Argininosuccinate lyase, found in Streptococcus pneumoniae serotype 2 (strain D39 / NCTC 7466).